Here is a 161-residue protein sequence, read N- to C-terminus: DNA-binding protein inhibitor ID-4 (161 aa).

A bHLH domain is found at 52-104 (AAEAAADEPALCLQCDMNDCYSRLRRLVPTIPPNKKVSKVEILQHVIDYILDL).

Heterodimer with other HLH proteins.

It localises to the nucleus. Functionally, transcriptional regulator (lacking a basic DNA binding domain) which negatively regulates the basic helix-loop-helix (bHLH) transcription factors by forming heterodimers and inhibiting their DNA binding and transcriptional activity. Implicated in regulating a variety of cellular processes, including cellular growth, senescence, differentiation, apoptosis, angiogenesis, and neoplastic transformation. The polypeptide is DNA-binding protein inhibitor ID-4 (Id4) (Mus musculus (Mouse)).